The following is an 851-amino-acid chain: Probable alpha,alpha-trehalose-phosphate synthase [UDP-forming] 7 (851 aa).

A Phosphoserine modification is found at Ser5. Thr32 carries the phosphothreonine modification. A glycosyltransferase region spans residues 59 to 540 (DRMIIVANRL…SRSFLQDLER (482 aa)).

In the N-terminal section; belongs to the glycosyltransferase 20 family. The protein in the C-terminal section; belongs to the trehalose phosphatase family. As to quaternary structure, binds to the phosphopeptide-binding site of GRF/14-3-3. Post-translationally, phosphorylated. As to expression, expressed in seedlings, leaves, roots, stems, flowers and siliques.

The catalysed reaction is D-glucose 6-phosphate + UDP-alpha-D-glucose = alpha,alpha-trehalose 6-phosphate + UDP + H(+). This chain is Probable alpha,alpha-trehalose-phosphate synthase [UDP-forming] 7 (TPS7), found in Arabidopsis thaliana (Mouse-ear cress).